A 594-amino-acid chain; its full sequence is A-type ATP synthase subunit A (594 aa).

236–243 (GPFGSGKT) serves as a coordination point for ATP.

Belongs to the ATPase alpha/beta chains family. Has multiple subunits with at least A(3), B(3), C, D, E, F, H, I and proteolipid K(x).

It localises to the cell membrane. It carries out the reaction ATP + H2O + 4 H(+)(in) = ADP + phosphate + 5 H(+)(out). Its function is as follows. Component of the A-type ATP synthase that produces ATP from ADP in the presence of a proton gradient across the membrane. The A chain is the catalytic subunit. This chain is A-type ATP synthase subunit A, found in Pyrobaculum calidifontis (strain DSM 21063 / JCM 11548 / VA1).